Reading from the N-terminus, the 418-residue chain is Gamma-glutamyl phosphate reductase (418 aa).

The protein belongs to the gamma-glutamyl phosphate reductase family.

It localises to the cytoplasm. The catalysed reaction is L-glutamate 5-semialdehyde + phosphate + NADP(+) = L-glutamyl 5-phosphate + NADPH + H(+). It participates in amino-acid biosynthesis; L-proline biosynthesis; L-glutamate 5-semialdehyde from L-glutamate: step 2/2. Its function is as follows. Catalyzes the NADPH-dependent reduction of L-glutamate 5-phosphate into L-glutamate 5-semialdehyde and phosphate. The product spontaneously undergoes cyclization to form 1-pyrroline-5-carboxylate. In Moorella thermoacetica (strain ATCC 39073 / JCM 9320), this protein is Gamma-glutamyl phosphate reductase.